Consider the following 405-residue polypeptide: MSESEQYSRNTLMDFIDYRPLDIEICDVTLRDGEQTPGVVFSKEQKLAVASELDSMGIEVIEAGFPVVSADEKEIVKEIANQGFNSRICCLSRAVKGDVDAALECDVDIVSIFIAMSDMHLKYKYHRSLEDMLGCAKEAIEYATDHGLKVRFAAEDASRTPVERLKQAFKEVENEYKVQYVSLADTVGILNPTTTNYLVSEIFKSVNTAICIHCHDDLGMATANTLAAAEAGAKQLHTTVNAIGERAGNASLEEVLVALRVQYGIERYDTTKLNSLSEMVSEYSGITPSVNKAVVGKNAFTHESGIHVAAILEEPRTYELFLPEMVGGKRNLVVGKHTGKKALKGIINSIGFCLEREELCALIEKVKVCTEEKHKSISRDQLERLITQVKQEQKPSGSEKEKFSI.

A Pyruvate carboxyltransferase domain is found at 23–274 (IEICDVTLRD…IERYDTTKLN (252 aa)).

It belongs to the alpha-IPM synthase/homocitrate synthase family.

The catalysed reaction is acetyl-CoA + 2-oxoglutarate + H2O = (2R)-homocitrate + CoA + H(+). It carries out the reaction 2-oxoadipate + acetyl-CoA + H2O = (R)-dihomocitrate + CoA + H(+). It catalyses the reaction 2-oxoheptanedioate + acetyl-CoA + H2O = (R)-trihomocitrate + CoA + H(+). Its pathway is organic acid metabolism; 2-oxosuberate biosynthesis. Catalyzes the condensation of alpha-ketoglutarate and acetyl-CoA to form (R)-homocitrate. Can also catalyze the condensation of alpha-ketoadipate with acetyl-CoA to form (R)-homo(2)citrate, and the condensation of alpha-ketopimelate with acetyl-CoA to form (R)-homo(3)citrate. These reactions are part of the biosynthesis pathway of coenzyme B and biotin. This chain is Homocitrate synthase AksA (aksA), found in Methanosarcina mazei (strain ATCC BAA-159 / DSM 3647 / Goe1 / Go1 / JCM 11833 / OCM 88) (Methanosarcina frisia).